The following is a 420-amino-acid chain: Type II methyltransferase M.NmeDI (420 aa).

Positions 1–23 are disordered; sequence MMSLKIQPAVPKKSDKPSATNRD. Residues 56–411 form the SAM-dependent MTase C5-type domain; the sequence is TLIFSFFSGA…MTLKSYLENH (356 aa). Cys148 is a catalytic residue.

Belongs to the class I-like SAM-binding methyltransferase superfamily. C5-methyltransferase family.

It catalyses the reaction a 2'-deoxycytidine in DNA + S-adenosyl-L-methionine = a 5-methyl-2'-deoxycytidine in DNA + S-adenosyl-L-homocysteine + H(+). In terms of biological role, a methylase that recognizes the double-stranded sequence 5'-RCCGGB-3', methylates C-2 on both strands, and protects the DNA from cleavage by the NmeDI endonuclease. In Neisseria meningitidis serogroup C, this protein is Type II methyltransferase M.NmeDI (nmeDIMP).